A 276-amino-acid polypeptide reads, in one-letter code: Checkpoint protein HUS1B (276 aa).

This sequence belongs to the HUS1 family. In terms of assembly, interacts with RAD1 and RAD9B.

The chain is Checkpoint protein HUS1B (Hus1b) from Mus musculus (Mouse).